The following is a 1840-amino-acid chain: Collagen alpha-1(V) chain (1840 aa).

Positions M1 to A30 are cleaved as a signal peptide. A Laminin G-like domain is found at D72–C244. The segment at R231–E445 is nonhelical region. Y234, Y236, Y240, Y262, Y263, Y336, Y338, and Y344 each carry sulfotyrosine. Disordered stretches follow at residues S241–Q547 and G561–Q1576. The segment covering N258 to G268 has biased composition (acidic residues). Composition is skewed to low complexity over residues D335–D352, P375–P387, and I462–G471. The segment at G446–R560 is interrupted collagenous region. A compositionally biased stretch (pro residues) spans P472 to T487. Composition is skewed to low complexity over residues L508–P525 and G561–P572. The segment at G561–G1572 is triple-helical region. 3 positions are modified to 4-hydroxyproline: P572, P578, and P623. Position 629 is a 5-hydroxylysine (K629). P641 carries the 4-hydroxyproline modification. Position 644 is a 5-hydroxylysine (K644). A 4-hydroxyproline mark is found at P650, P656, P659, P677, and P680. The span at P673 to P688 shows a compositional bias: low complexity. P682 and P688 each carry 3-hydroxyproline. Over residues K689–P698 the composition is skewed to pro residues. 4-hydroxyproline occurs at positions 692, 698, and 707. K710 bears the 5-hydroxylysine mark. 4-hydroxyproline occurs at positions 719, 722, 728, and 734. Residues Q724–P743 show a composition bias toward low complexity. 5-hydroxylysine is present on K746. Residues L749 to P758 are compositionally biased toward low complexity. 5 positions are modified to 4-hydroxyproline: P752, P758, P764, P767, and P773. K776 bears the 5-hydroxylysine mark. 2 positions are modified to 4-hydroxyproline: P782 and P791. 4 positions are modified to 5-hydroxylysine: K797, K806, K809, and K812. P818 bears the 4-hydroxyproline mark. Residue K821 is modified to 5-hydroxylysine. P836 is subject to 4-hydroxyproline. The segment covering R839–K848 has biased composition (basic and acidic residues). Residues K848 and K866 each carry the 5-hydroxylysine modification. A 4-hydroxyproline mark is found at P872, P875, and P878. K884 is modified (5-hydroxylysine). 4-hydroxyproline occurs at positions 890 and 893. The residue at position 899 (K899) is a 5-hydroxylysine. 2 positions are modified to 4-hydroxyproline: P905 and P908. The span at P910 to P919 shows a compositional bias: low complexity. A 4-hydroxyproline mark is found at P932 and P947. 2 stretches are compositionally biased toward low complexity: residues K973 to T992 and V1001 to M1013. A 4-hydroxyproline mark is found at P1019, P1022, P1025, and P1031. The segment covering S1090–P1106 has biased composition (low complexity). Residues R1108–P1117 are compositionally biased toward pro residues. P1223 and P1226 each carry 4-hydroxyproline. Positions P1261–P1270 are enriched in low complexity. The segment covering G1296–G1305 has biased composition (gly residues). Composition is skewed to pro residues over residues T1382–A1400 and S1456–L1471. A 4-hydroxyproline mark is found at P1469 and P1472. Low complexity predominate over residues P1487–P1496. A compositionally biased stretch (pro residues) spans P1528–P1543. The span at K1544–K1556 shows a compositional bias: low complexity. Residues E1573–A1607 form a nonhelical region region. A sulfotyrosine mark is found at Y1603 and Y1606. The region spanning E1611 to L1839 is the Fibrillar collagen NC1 domain.

The protein belongs to the fibrillar collagen family. As to quaternary structure, trimers of two alpha 1(V) and one alpha 2(V) chains in most tissues and trimers of one alpha 1(V), one alpha 2(V), and one alpha 3(V) chains in placenta. Interacts with CSPG4. Prolines at the third position of the tripeptide repeating unit (G-X-Y) are hydroxylated in some or all of the chains. In terms of processing, sulfated on 40% of tyrosines. Post-translationally, hydroxylation on proline residues within the sequence motif, GXPG, is most likely to be 4-hydroxy as this fits the requirement for 4-hydroxylation in vertebrates. In terms of tissue distribution, a high molecular weight form was detected in Schwann cells and peripheral nerve. A lower, probably processed form, is detected in all other tissues tested (at protein level).

The protein localises to the secreted. It is found in the extracellular space. It localises to the extracellular matrix. Its function is as follows. Type V collagen is a member of group I collagen (fibrillar forming collagen). It is a minor connective tissue component of nearly ubiquitous distribution. Type V collagen binds to DNA, heparan sulfate, thrombospondin, heparin, and insulin. This is Collagen alpha-1(V) chain (Col5a1) from Rattus norvegicus (Rat).